The primary structure comprises 112 residues: Small ribosomal subunit protein bS6 (112 aa).

This sequence belongs to the bacterial ribosomal protein bS6 family.

Functionally, binds together with bS18 to 16S ribosomal RNA. This chain is Small ribosomal subunit protein bS6, found in Chlamydia felis (strain Fe/C-56) (Chlamydophila felis).